We begin with the raw amino-acid sequence, 346 residues long: Probable dolichyl-diphosphooligosaccharide--protein glycosyltransferase subunit 3B (346 aa).

Residues 1 to 22 (MALKSKLVSLLFLIATLSSTFA) form the signal peptide. The Lumenal segment spans residues 23–189 (ASFSDSDSDS…KVGPIQRPPL (167 aa)). Asn108 carries an N-linked (GlcNAc...) asparagine glycan. A helical transmembrane segment spans residues 190-210 (LSKPQIGIIVALIVIATPFII). The Cytoplasmic segment spans residues 211–225 (KRVLKGETILHDTRL). The chain crosses the membrane as a helical span at residues 226–246 (WLSGAIFIYFFSVAGTMHNII). At 247 to 277 (RKMPMFLQDRNDPNKLVFFYQGSGMQLGAEG) the chain is on the lumenal side. The helical transmembrane segment at 278–298 (FAVGFLYTVVGLLLAFVTNVL) threads the bilayer. Residues 299–308 (VRVKNITAQR) are Cytoplasmic-facing. Residues 309-329 (LIMLLALFISFWAVKKVVYLD) form a helical membrane-spanning segment. Residues 330-346 (NWKTGYGIHPYWPSSWR) lie on the Lumenal side of the membrane.

This sequence belongs to the OST3/OST6 family. Component of the oligosaccharyltransferase (OST) complex.

Its subcellular location is the endoplasmic reticulum membrane. Subunit of the oligosaccharyl transferase (OST) complex that catalyzes the initial transfer of a defined glycan (Glc(3)Man(9)GlcNAc(2) in eukaryotes) from the lipid carrier dolichol-pyrophosphate to an asparagine residue within an Asn-X-Ser/Thr consensus motif in nascent polypeptide chains, the first step in protein N-glycosylation. N-glycosylation occurs cotranslationally and the complex associates with the Sec61 complex at the channel-forming translocon complex that mediates protein translocation across the endoplasmic reticulum (ER). All subunits are required for a maximal enzyme activity. The protein is Probable dolichyl-diphosphooligosaccharide--protein glycosyltransferase subunit 3B (OST3B) of Arabidopsis thaliana (Mouse-ear cress).